The following is a 137-amino-acid chain: Small ribosomal subunit protein uS12 (137 aa).

Disordered regions lie at residues 1–22 (MPTI…SKSP) and 35–57 (ATNN…TPKK). The segment covering 9 to 18 (RKPRKSKVSK) has biased composition (basic residues). The residue at position 102 (Asp102) is a 3-methylthioaspartic acid.

Belongs to the universal ribosomal protein uS12 family. As to quaternary structure, part of the 30S ribosomal subunit. Contacts proteins S8 and S17. May interact with IF1 in the 30S initiation complex.

With S4 and S5 plays an important role in translational accuracy. Its function is as follows. Interacts with and stabilizes bases of the 16S rRNA that are involved in tRNA selection in the A site and with the mRNA backbone. Located at the interface of the 30S and 50S subunits, it traverses the body of the 30S subunit contacting proteins on the other side and probably holding the rRNA structure together. The combined cluster of proteins S8, S12 and S17 appears to hold together the shoulder and platform of the 30S subunit. The chain is Small ribosomal subunit protein uS12 from Leuconostoc mesenteroides subsp. mesenteroides (strain ATCC 8293 / DSM 20343 / BCRC 11652 / CCM 1803 / JCM 6124 / NCDO 523 / NBRC 100496 / NCIMB 8023 / NCTC 12954 / NRRL B-1118 / 37Y).